The sequence spans 458 residues: Mannan endo-1,6-alpha-mannosidase DFG5 (458 aa).

An N-terminal signal peptide occupies residues 1 to 26; sequence MIVNISAKMILSICFTFLSFFKATHA. N-linked (GlcNAc...) asparagine glycans are attached at residues Asn89, Asn114, Asn138, Asn208, Asn231, Asn245, Asn270, Asn273, and Asn417. Residues 399–418 form a disordered region; it reads PYKEDNGGTSKGDANAGMNS. Gly437 carries GPI-anchor amidated glycine lipidation. Positions 438–458 are cleaved as a propeptide — removed in mature form; sequence AAIITAVILSVLTGGAVWMLF.

It belongs to the glycosyl hydrolase 76 family. In terms of processing, N-glycosylated.

Its subcellular location is the cell membrane. It catalyses the reaction Random hydrolysis of (1-&gt;6)-alpha-D-mannosidic linkages in unbranched (1-&gt;6)-mannans.. Required for normal synthesis of the cell wall. The protein is Mannan endo-1,6-alpha-mannosidase DFG5 (DFG5) of Saccharomyces cerevisiae (strain ATCC 204508 / S288c) (Baker's yeast).